Here is a 39-residue protein sequence, read N- to C-terminus: Cytochrome b559 subunit beta (39 aa).

Residues 14 to 30 (WLAVHGLAVPTVFFLGS) form a helical membrane-spanning segment. H18 contacts heme.

This sequence belongs to the PsbE/PsbF family. Heterodimer of an alpha subunit and a beta subunit. PSII is composed of 1 copy each of membrane proteins PsbA, PsbB, PsbC, PsbD, PsbE, PsbF, PsbH, PsbI, PsbJ, PsbK, PsbL, PsbM, PsbT, PsbX, PsbY, PsbZ, Psb30/Ycf12, at least 3 peripheral proteins of the oxygen-evolving complex and a large number of cofactors. It forms dimeric complexes. Heme b serves as cofactor.

It localises to the plastid. The protein localises to the chloroplast thylakoid membrane. In terms of biological role, this b-type cytochrome is tightly associated with the reaction center of photosystem II (PSII). PSII is a light-driven water:plastoquinone oxidoreductase that uses light energy to abstract electrons from H(2)O, generating O(2) and a proton gradient subsequently used for ATP formation. It consists of a core antenna complex that captures photons, and an electron transfer chain that converts photonic excitation into a charge separation. The protein is Cytochrome b559 subunit beta of Nicotiana glutinosa (Tobacco).